The sequence spans 275 residues: Rhamnulose-1-phosphate aldolase (275 aa).

Residue Glu117 is part of the active site. Zn(2+) is bound by residues His141, His143, and His212.

It belongs to the aldolase class II family. RhaD subfamily. Homotetramer. The cofactor is Zn(2+).

It localises to the cytoplasm. The enzyme catalyses L-rhamnulose 1-phosphate = (S)-lactaldehyde + dihydroxyacetone phosphate. The protein operates within carbohydrate degradation; L-rhamnose degradation; glycerone phosphate from L-rhamnose: step 3/3. Functionally, catalyzes the reversible cleavage of L-rhamnulose-1-phosphate to dihydroxyacetone phosphate (DHAP) and L-lactaldehyde. In Salmonella paratyphi B (strain ATCC BAA-1250 / SPB7), this protein is Rhamnulose-1-phosphate aldolase.